The following is a 395-amino-acid chain: Small RNA 2'-O-methyltransferase (395 aa).

S-adenosyl-L-methionine-binding residues include Asp-79 and Ser-115. Mg(2+) contacts are provided by Glu-133, Glu-136, His-137, and His-182.

The protein belongs to the methyltransferase superfamily. HEN1 family. Mg(2+) is required as a cofactor. In terms of tissue distribution, specifically expressed in testis.

The protein resides in the cytoplasm. The enzyme catalyses small RNA 3'-end nucleotide + S-adenosyl-L-methionine = small RNA 3'-end 2'-O-methylnucleotide + S-adenosyl-L-homocysteine + H(+). Its function is as follows. Methyltransferase that adds a 2'-O-methyl group at the 3'-end of piRNAs, a class of 24 to 30 nucleotide RNAs that are generated by a Dicer-independent mechanism and are primarily derived from transposons and other repeated sequence elements. This probably protects the 3'-end of piRNAs from uridylation activity and subsequent degradation. Stabilization of piRNAs is essential for gametogenesis. This is Small RNA 2'-O-methyltransferase (Henmt1) from Mus musculus (Mouse).